A 414-amino-acid chain; its full sequence is Putative dipeptidase TRV_05564 (414 aa).

A signal peptide spans 1 to 20 (MAALFVSLLALTSLVPVQGA). Positions 45, 47, and 157 each coordinate Zn(2+). A disulfide bond links Cys-96 and Cys-186. His-184 is a substrate binding site. Zn(2+)-binding residues include His-228 and His-249. Arg-260 and Asp-320 together coordinate substrate. N-linked (GlcNAc...) asparagine glycosylation occurs at Asn-392.

Belongs to the metallo-dependent hydrolases superfamily. Peptidase M19 family. Zn(2+) serves as cofactor.

It carries out the reaction an L-aminoacyl-L-amino acid + H2O = 2 an L-alpha-amino acid. Its function is as follows. Hydrolyzes a wide range of dipeptides. This chain is Putative dipeptidase TRV_05564, found in Trichophyton verrucosum (strain HKI 0517).